Consider the following 498-residue polypeptide: ATP synthase subunit beta, chloroplastic (498 aa).

Position 172-179 (172-179 (GGAGVGKT)) interacts with ATP.

The protein belongs to the ATPase alpha/beta chains family. F-type ATPases have 2 components, CF(1) - the catalytic core - and CF(0) - the membrane proton channel. CF(1) has five subunits: alpha(3), beta(3), gamma(1), delta(1), epsilon(1). CF(0) has four main subunits: a(1), b(1), b'(1) and c(9-12).

It is found in the plastid. The protein localises to the chloroplast thylakoid membrane. It catalyses the reaction ATP + H2O + 4 H(+)(in) = ADP + phosphate + 5 H(+)(out). Its function is as follows. Produces ATP from ADP in the presence of a proton gradient across the membrane. The catalytic sites are hosted primarily by the beta subunits. This chain is ATP synthase subunit beta, chloroplastic, found in Whiteheadia bifolia (Elephants ears).